Consider the following 341-residue polypeptide: S-adenosylmethionine:tRNA ribosyltransferase-isomerase (341 aa).

It belongs to the QueA family. As to quaternary structure, monomer.

Its subcellular location is the cytoplasm. The catalysed reaction is 7-aminomethyl-7-carbaguanosine(34) in tRNA + S-adenosyl-L-methionine = epoxyqueuosine(34) in tRNA + adenine + L-methionine + 2 H(+). Its pathway is tRNA modification; tRNA-queuosine biosynthesis. In terms of biological role, transfers and isomerizes the ribose moiety from AdoMet to the 7-aminomethyl group of 7-deazaguanine (preQ1-tRNA) to give epoxyqueuosine (oQ-tRNA). The sequence is that of S-adenosylmethionine:tRNA ribosyltransferase-isomerase from Herminiimonas arsenicoxydans.